Consider the following 342-residue polypeptide: Delta-aminolevulinic acid dehydratase (342 aa).

Residues Cys-133, Cys-135, and Cys-143 each coordinate Zn(2+). Lys-210 functions as the Schiff-base intermediate with substrate in the catalytic mechanism. The 5-aminolevulinate site is built by Arg-220 and Arg-232. Ser-254 is modified (phosphoserine). Lys-263 functions as the Schiff-base intermediate with substrate in the catalytic mechanism. 5-aminolevulinate-binding residues include Ser-290 and Tyr-329.

The protein belongs to the ALAD family. In terms of assembly, homooctamer. Requires Zn(2+) as cofactor.

The enzyme catalyses 2 5-aminolevulinate = porphobilinogen + 2 H2O + H(+). Its pathway is porphyrin-containing compound metabolism; protoporphyrin-IX biosynthesis; coproporphyrinogen-III from 5-aminolevulinate: step 1/4. Its activity is regulated as follows. Inhibited by divalent lead ions. Catalyzes an early step in the biosynthesis of tetrapyrroles. Binds two molecules of 5-aminolevulinate per subunit, each at a distinct site, and catalyzes their condensation to form porphobilinogen. This is Delta-aminolevulinic acid dehydratase (HEM2) from Saccharomyces cerevisiae (strain ATCC 204508 / S288c) (Baker's yeast).